The sequence spans 446 residues: GRAM domain-containing protein 2B (446 aa).

At methionine 1 the chain carries N-acetylmethionine. The segment at 1-120 (MVKKRLPSND…RKKSSSSSQY (120 aa)) is disordered. Residues 29–43 (SRSSTDSPSSVFFSS) are compositionally biased toward low complexity. Over residues 95 to 113 (DKNDCKTESKNDPKTERKK) the composition is skewed to basic and acidic residues. Positions 124–191 (MHFHKLFLSV…FSVTLIKKTK (68 aa)) constitute a GRAM domain. Polar residues predominate over residues 234 to 247 (TSVGNSPNPSSAEN). Residues 234–253 (TSVGNSPNPSSAENSFRADR) are disordered. A phosphoserine mark is found at serine 239, serine 256, and serine 266. The tract at residues 276–298 (RQDMEGYSSSGSQTPESENSRDF) is disordered. Positions 282-292 (YSSSGSQTPES) are enriched in polar residues.

This chain is GRAM domain-containing protein 2B (GRAMD2B), found in Pongo abelii (Sumatran orangutan).